The following is an 802-amino-acid chain: Elongation factor G, mitochondrial (802 aa).

A mitochondrion-targeting transit peptide spans M1 to L24. In terms of domain architecture, tr-type G spans S100 to S387. GTP contacts are provided by residues A109–T116, D185–H189, and N239–D242.

The protein belongs to the TRAFAC class translation factor GTPase superfamily. Classic translation factor GTPase family. EF-G/EF-2 subfamily.

Its subcellular location is the mitochondrion. It participates in protein biosynthesis; polypeptide chain elongation. Its function is as follows. Mitochondrial GTPase that catalyzes the GTP-dependent ribosomal translocation step during translation elongation. During this step, the ribosome changes from the pre-translocational (PRE) to the post-translocational (POST) state as the newly formed A-site-bound peptidyl-tRNA and P-site-bound deacylated tRNA move to the P and E sites, respectively. Catalyzes the coordinated movement of the two tRNA molecules, the mRNA and conformational changes in the ribosome. This chain is Elongation factor G, mitochondrial (mef1), found in Aspergillus fumigatus (strain CBS 144.89 / FGSC A1163 / CEA10) (Neosartorya fumigata).